Reading from the N-terminus, the 174-residue chain is 2-oxo-4-hydroxy-4-carboxy-5-ureidoimidazoline decarboxylase (174 aa).

Catalysis depends on His-67, which acts as the Proton donor. Residues Pro-68, 84 to 88 (SQEEQ), and 119 to 123 (FVICA) contribute to the substrate site. Positions 172–174 (TKL) match the Microbody targeting signal motif.

Belongs to the OHCU decarboxylase family. As to quaternary structure, homodimer.

The protein resides in the peroxisome. The enzyme catalyses 5-hydroxy-2-oxo-4-ureido-2,5-dihydro-1H-imidazole-5-carboxylate + H(+) = (S)-allantoin + CO2. The protein operates within purine metabolism; urate degradation; (S)-allantoin from urate: step 3/3. In terms of biological role, catalyzes the stereoselective decarboxylation of 2-oxo-4-hydroxy-4-carboxy-5-ureidoimidazoline (OHCU) to (S)-allantoin. This chain is 2-oxo-4-hydroxy-4-carboxy-5-ureidoimidazoline decarboxylase (urad), found in Danio rerio (Zebrafish).